Here is a 221-residue protein sequence, read N- to C-terminus: Abscisic acid receptor PYL1 (221 aa).

A compositionally biased stretch (low complexity) spans 1–11 (MANSESSSSPV). Residues 1–22 (MANSESSSSPVNEEENSQRIST) are disordered. Ala-2 bears the N-acetylalanine mark. The segment at 50-206 (YQLGNGRCSS…NLQKLASITE (157 aa)) is START-like. Abscisate-binding positions include Lys-86, 116–121 (ANTSRE), 143–149 (RLRNYKS), and Glu-171. Positions 112-116 (SGLPA) match the Gate loop motif. A Latch loop motif is present at residues 142–144 (HRL).

This sequence belongs to the PYR/PYL/RCAR abscisic acid intracellular receptor family. Homodimer. Binds ABA on one subunit only. Interacts with HAB1, ABI1 and ABI2, and possibly with other PP2Cs. Binds to CARs protein in an ABA-independent manner, both at the plasma membrane and in the nucleus. Interacts directly with CAR1 and CAR4.

The protein resides in the cytoplasm. It localises to the nucleus. It is found in the cell membrane. Receptor for abscisic acid (ABA) required for ABA-mediated responses such as stomatal closure and germination inhibition. Inhibits the activity of group-A protein phosphatases type 2C (PP2Cs) when activated by ABA. Can be activated by both (-)-ABA and (+)-ABA. In Arabidopsis thaliana (Mouse-ear cress), this protein is Abscisic acid receptor PYL1 (PYL1).